The following is a 105-amino-acid chain: Phosphoribosyl-ATP pyrophosphatase (105 aa).

It belongs to the PRA-PH family.

It localises to the cytoplasm. The catalysed reaction is 1-(5-phospho-beta-D-ribosyl)-ATP + H2O = 1-(5-phospho-beta-D-ribosyl)-5'-AMP + diphosphate + H(+). Its pathway is amino-acid biosynthesis; L-histidine biosynthesis; L-histidine from 5-phospho-alpha-D-ribose 1-diphosphate: step 2/9. The chain is Phosphoribosyl-ATP pyrophosphatase from Ruegeria pomeroyi (strain ATCC 700808 / DSM 15171 / DSS-3) (Silicibacter pomeroyi).